The chain runs to 165 residues: Minor capsid protein VP2 (165 aa).

It belongs to the sapovirus VP2 family. Homooligomer. The portal-like structure consists in 12 copies of VP2. Interacts with capsid protein VP1.

It localises to the virion. The protein resides in the host cytoplasm. Its function is as follows. Minor structural protein that forms a portal-like structure at a unique three-fold axis of symmetry, following binding to the host receptor. The channel formed by VP2 may allow the delivery of the viral genome through the host endosomal membrane. The sequence is that of Minor capsid protein VP2 from Homo sapiens (Human).